A 104-amino-acid chain; its full sequence is Zinc-containing ferredoxin-1 (104 aa).

Residues Gly2–Thr37 are N-terminal extension. Zn(2+) contacts are provided by His17 and His20. At Lys30 the chain carries N6-methyllysine. His35 provides a ligand contact to Zn(2+). 4Fe-4S ferredoxin-type domains are found at residues Ile38 to Thr66 and Lys75 to Pro104. [3Fe-4S] cluster contacts are provided by Cys46 and Cys52. Cys56 contacts [4Fe-4S] cluster. Residue Asp77 coordinates Zn(2+). Positions 84, 87, and 90 each coordinate [4Fe-4S] cluster. Cys94 lines the [3Fe-4S] cluster pocket.

It depends on [3Fe-4S] cluster as a cofactor. [4Fe-4S] cluster is required as a cofactor. Zn(2+) serves as cofactor.

Its function is as follows. Ferredoxins are iron-sulfur proteins that transfer electrons in a wide variety of metabolic reactions. In Sulfurisphaera tokodaii (strain DSM 16993 / JCM 10545 / NBRC 100140 / 7) (Sulfolobus tokodaii), this protein is Zinc-containing ferredoxin-1 (zfx1).